Here is a 654-residue protein sequence, read N- to C-terminus: MICOS complex subunit MIC60-2 (654 aa).

A mitochondrion-targeting transit peptide spans 1–12 (MRGSRNLLTQRL). Over 13–20 (ASSRATGS) the chain is Mitochondrial matrix. A helical membrane pass occupies residues 21–43 (SGGLKFVGATVGAVTAGAAGVAG). Topologically, residues 44 to 654 (YASYDNEFRK…AALTSIRSTY (611 aa)) are mitochondrial intermembrane. The span at 115-129 (LKETTEPKKIEKKPE) shows a compositional bias: basic and acidic residues. The segment at 115-140 (LKETTEPKKIEKKPENPYIGAKTPLN) is disordered.

The protein belongs to the MICOS complex subunit Mic60 family. Component of the mitochondrial contact site and cristae organizing system (MICOS) complex. Expressed in the gonads and muscle cells.

It localises to the mitochondrion inner membrane. The protein resides in the cytoplasm. In terms of biological role, sustains mitochondrial morphology probably through maintaining cristae morphology. May act as a component of the MICOS complex, a large protein complex of the mitochondria. The sequence is that of MICOS complex subunit MIC60-2 from Caenorhabditis elegans.